The chain runs to 675 residues: Heat shock 70 kDa protein, mitochondrial (675 aa).

A mitochondrion-targeting transit peptide spans 1–52; sequence MAATLLRSLQRRNLSSSSVSAFRSLTGSTKTSYATHKLASLTRPFSSRPAGN. The disordered stretch occupies residues 639-675; it reads VSKIGQHMSGGSSGGPSEGGSQGGEQAPEAEYEEVKK. The segment covering 649 to 661 has biased composition (gly residues); sequence GSSGGPSEGGSQG. Positions 666–675 are enriched in acidic residues; the sequence is PEAEYEEVKK.

The protein belongs to the heat shock protein 70 family.

The protein localises to the mitochondrion. The polypeptide is Heat shock 70 kDa protein, mitochondrial (HSP1) (Pisum sativum (Garden pea)).